A 989-amino-acid polypeptide reads, in one-letter code: R3H domain-containing protein 2 (989 aa).

2 disordered regions span residues 23 to 71 (EESV…AKSN) and 106 to 147 (SCPS…QEYT). Positions 36-56 (PSKEEIEKESEDTSLRQETQR) are enriched in basic and acidic residues. S37 is subject to Phosphoserine. The segment covering 58–71 (TSNHGHARKRAKSN) has biased composition (basic residues). A compositionally biased stretch (basic and acidic residues) spans 109–143 (SDKEEEKSTKDVSEKEDKDKNKEKVPRRMLSRDSS). Phosphoserine is present on S143. In terms of domain architecture, R3H spans 169-232 (RMMLLKLEQE…AVIINKTSNT (64 aa)). One can recognise an SUZ domain in the interval 233 to 303 (RIPEQRFSEH…VRERIFARET (71 aa)). Disordered stretches follow at residues 267–288 (DDNQIRVPLQDGRRSKSIEERE), 306–390 (NGYL…ISRP), 416–479 (TAQQ…FQPP), 493–524 (ASTGQPLPTSNYSTSSHAPPTQQVLPPQGYMQ), 674–738 (GTSP…PSMV), 751–793 (RGQK…SLSN), and 848–867 (QGQSGLKHGNRSKRQALKSA). The segment covering 277-288 (DGRRSKSIEERE) has biased composition (basic and acidic residues). The segment covering 320-331 (SRTSSSRQSSTD) has biased composition (low complexity). S344, S347, and S363 each carry phosphoserine. Residues 416–428 (TAQQQQQQQQQLP) show a composition bias toward low complexity. Polar residues-rich tracts occupy residues 454–466 (PFGQMSLSRQGST) and 493–517 (ASTGQPLPTSNYSTSSHAPPTQQVL). Over residues 695–704 (SPSPCSPPQM) the composition is skewed to pro residues. Residues 705-727 (PQQYSGVSPSGPGVVVMQLNVPN) are compositionally biased toward low complexity. Residues 761 to 771 (PESSPQANTQM) show a composition bias toward polar residues. Residues 772 to 790 (SSSPVTSPTQSPAPSPVTS) show a composition bias toward low complexity. Phosphoserine is present on residues S866 and S868. Phosphothreonine occurs at positions 869 and 873.

The protein resides in the nucleus. This chain is R3H domain-containing protein 2 (R3HDM2), found in Bos taurus (Bovine).